The following is a 196-amino-acid chain: Large ribosomal subunit protein eL15 (196 aa).

The segment covering 69-98 (RKGGSRKQRHKAGRRSKRQGVNRLSRRKSI) has biased composition (basic residues). 2 disordered regions span residues 69–100 (RKGG…SIQR) and 161–196 (FRGL…RQGK). The span at 186–196 (PSVTGNDRQGK) shows a compositional bias: polar residues.

It belongs to the eukaryotic ribosomal protein eL15 family.

The chain is Large ribosomal subunit protein eL15 from Halorubrum lacusprofundi (strain ATCC 49239 / DSM 5036 / JCM 8891 / ACAM 34).